A 209-amino-acid polypeptide reads, in one-letter code: Uracil phosphoribosyltransferase (209 aa).

Residues Arg79, Arg104, and 131-139 (DPMLATGGT) contribute to the 5-phospho-alpha-D-ribose 1-diphosphate site. Uracil contacts are provided by residues Ile194 and 199-201 (GDA). Position 200 (Asp200) interacts with 5-phospho-alpha-D-ribose 1-diphosphate.

It belongs to the UPRTase family. Mg(2+) is required as a cofactor.

The catalysed reaction is UMP + diphosphate = 5-phospho-alpha-D-ribose 1-diphosphate + uracil. It participates in pyrimidine metabolism; UMP biosynthesis via salvage pathway; UMP from uracil: step 1/1. With respect to regulation, allosterically activated by GTP. Catalyzes the conversion of uracil and 5-phospho-alpha-D-ribose 1-diphosphate (PRPP) to UMP and diphosphate. The polypeptide is Uracil phosphoribosyltransferase (Pseudoalteromonas translucida (strain TAC 125)).